The chain runs to 318 residues: Aspartate carbamoyltransferase catalytic subunit (318 aa).

Carbamoyl phosphate is bound by residues arginine 57 and threonine 58. L-aspartate is bound at residue lysine 85. Carbamoyl phosphate contacts are provided by arginine 107, histidine 141, and glutamine 144. L-aspartate contacts are provided by arginine 174 and arginine 228. Residues glycine 269 and proline 270 each coordinate carbamoyl phosphate.

The protein belongs to the aspartate/ornithine carbamoyltransferase superfamily. ATCase family. In terms of assembly, heterododecamer (2C3:3R2) of six catalytic PyrB chains organized as two trimers (C3), and six regulatory PyrI chains organized as three dimers (R2).

It catalyses the reaction carbamoyl phosphate + L-aspartate = N-carbamoyl-L-aspartate + phosphate + H(+). The protein operates within pyrimidine metabolism; UMP biosynthesis via de novo pathway; (S)-dihydroorotate from bicarbonate: step 2/3. In terms of biological role, catalyzes the condensation of carbamoyl phosphate and aspartate to form carbamoyl aspartate and inorganic phosphate, the committed step in the de novo pyrimidine nucleotide biosynthesis pathway. The protein is Aspartate carbamoyltransferase catalytic subunit of Mycolicibacterium smegmatis (strain ATCC 700084 / mc(2)155) (Mycobacterium smegmatis).